The sequence spans 192 residues: Fe/S biogenesis protein NfuA (192 aa).

Residues Cys-149 and Cys-152 each contribute to the [4Fe-4S] cluster site.

It belongs to the NfuA family. Homodimer. Requires [4Fe-4S] cluster as cofactor.

Involved in iron-sulfur cluster biogenesis. Binds a 4Fe-4S cluster, can transfer this cluster to apoproteins, and thereby intervenes in the maturation of Fe/S proteins. Could also act as a scaffold/chaperone for damaged Fe/S proteins. This is Fe/S biogenesis protein NfuA from Shewanella amazonensis (strain ATCC BAA-1098 / SB2B).